A 105-amino-acid polypeptide reads, in one-letter code: Small ribosomal subunit protein uS10 (105 aa).

This sequence belongs to the universal ribosomal protein uS10 family. In terms of assembly, part of the 30S ribosomal subunit.

Functionally, involved in the binding of tRNA to the ribosomes. This Synechococcus sp. (strain JA-3-3Ab) (Cyanobacteria bacterium Yellowstone A-Prime) protein is Small ribosomal subunit protein uS10.